A 230-amino-acid polypeptide reads, in one-letter code: Sugar fermentation stimulation protein homolog (230 aa).

The protein belongs to the SfsA family.

This Clostridium perfringens (strain SM101 / Type A) protein is Sugar fermentation stimulation protein homolog.